Reading from the N-terminus, the 3926-residue chain is Protein bassoon (3926 aa).

A disordered region spans residues 1–161 (MGNEVSLEGG…PTSPYSVPQI (161 aa)). A lipid anchor (N-myristoyl glycine) is attached at G2. 2 stretches are compositionally biased toward pro residues: residues 15–30 (PLPPGGAGPGPGPGPG) and 58–72 (PPVPGPGPGPGPGPG). Residues 23–32 (PGPGPGPGPG) form a 5 X 2 AA tandem repeats of P-G region. Residues 61-74 (PGPGPGPGPGPGPG) form a 7 X 2 AA tandem repeats of P-G region. Composition is skewed to polar residues over residues 90–105 (RAASPTPKQASATTPG) and 130–157 (QVDSRTQRSGRSPSVSPDRGSTPTSPYS). The residue at position 145 (S145) is a Phosphoserine. R148 is subject to Omega-N-methylarginine. C4-type zinc fingers lie at residues 170-193 (CPICKTSDLTSTPSQPNFNTCTQC) and 198-220 (CNQCGFNPNPHLTQVKEWLCLNC). 2 disordered regions span residues 231–343 (TTAP…EQTQ) and 366–459 (SVQP…KTMP). Residues 233-243 (APRSKSQQQLH) show a composition bias toward polar residues. S244 and S248 each carry phosphoserine. Residues 366-377 (SVQPEADTQGQP) are compositionally biased toward polar residues. 2 C4-type zinc fingers span residues 465 to 488 (CPLCQAELNVGSKSPANYNTCTTC) and 493 to 515 (CNLCGFNPTPHLVEKTEWLCLNC). Disordered regions lie at residues 524–927 (SLGE…LQGG) and 940–1248 (GSYG…AEGT). Residues 552–569 (PLKQKGPQGLGQPSGPLP) are compositionally biased toward low complexity. 3 repeat units span residues 571-577 (KASPLST), 578-584 (KASPLPS), and 585-591 (KASPQAK). Residues 571-591 (KASPLSTKASPLPSKASPQAK) form a 3 X 7 AA tandem repeats of K-A-S-P-[LQ]-[APS]-[KST] region. The segment covering 619–631 (MPKPPPETTPTPA) has biased composition (pro residues). Residues 671 to 680 (QDASRSPQSL) are compositionally biased toward polar residues. Residues 681 to 698 (SDTGYSSDGISSSQSEIT) show a composition bias toward low complexity. Over residues 771 to 787 (FDSDEELEDILEEDEDS) the composition is skewed to acidic residues. A compositionally biased stretch (basic and acidic residues) spans 788 to 797 (AEWRRRREQQ). The span at 851 to 862 (SAEEDNLEEDDT) shows a compositional bias: acidic residues. R867 carries the post-translational modification Omega-N-methylarginine. Position 970 is a phosphoserine (S970). The segment covering 984–1001 (PASTPSYTSGTSPTSLSS) has biased composition (low complexity). A coiled-coil region spans residues 1037-1092 (IEDSSEEEELREEEELLREQEKMREVEQQRIRSTARKTRRDKEELRAQRRRERSKT). Residues 1039–1052 (DSSEEEELREEEEL) show a composition bias toward acidic residues. Phosphoserine is present on residues S1040 and S1041. The segment covering 1053 to 1066 (LREQEKMREVEQQR) has biased composition (basic and acidic residues). Residue S1090 is modified to Phosphoserine. T1092 bears the Phosphothreonine mark. 2 positions are modified to phosphoserine: S1098 and S1104. A compositionally biased stretch (basic and acidic residues) spans 1107–1122 (EELRQAAEMEELHRSS). Low complexity-rich tracts occupy residues 1123–1133 (CSEYSPSPSLD) and 1163–1180 (SPTETPSGSSTTPSSGRP). A coiled-coil region spans residues 1181-1208 (LKSAEEAYEEMMRKAELLQRQQGQAAGA). Residues 1182–1197 (KSAEEAYEEMMRKAEL) are compositionally biased toward basic and acidic residues. The span at 1199–1209 (QRQQGQAAGAR) shows a compositional bias: low complexity. Position 1226 is a phosphoserine (S1226). Residues 1276–1294 (RDLAFAEDKKKEKQFLNAE) are a coiled coil. 2 disordered regions span residues 1298–1547 (MDPM…RLVW) and 1570–1620 (RMVH…RVPS). Over residues 1322–1332 (SFSTPTSSDSS) the composition is skewed to low complexity. The O-linked (GlcNAc) threonine glycan is linked to T1343. Basic and acidic residues predominate over residues 1346-1355 (FAKETQDPLK). Low complexity-rich tracts occupy residues 1358–1367 (SSPASPSSAS) and 1377–1392 (GPGTPATTAVAPCPAG). Residue T1384 is glycosylated (O-linked (GlcNAc) threonine). Positions 1408–1434 (RSPSPSSTAHSYGHSPTTANYGSQTED) are enriched in polar residues. A compositionally biased stretch (low complexity) spans 1466 to 1493 (PSRAYSYFASSSPPLSPSSPSESPTFSP). Phosphoserine occurs at positions 1477, 1486, and 1488. Over residues 1570–1598 (RMVHASASTSPLCSPTETQPTTHGYSQTT) the composition is skewed to polar residues. The segment covering 1606-1616 (PPEPPGPPGFP) has biased composition (pro residues). An omega-N-methylarginine mark is found at R1787 and R1791. R1801 is modified (asymmetric dimethylarginine; alternate). R1801 is modified (omega-N-methylarginine; alternate). Position 1813 is an omega-N-methylarginine (R1813). The tract at residues 1924–1978 (PEKSMADAAPPGQSSSPFYGPRDPEPPEPPTYRAQGVVGPGPHEEQRPYPQGLPG) is disordered. Phosphoserine occurs at positions 1985 and 2041. An omega-N-methylarginine mark is found at R2046 and R2076. 3 positions are modified to asymmetric dimethylarginine: R2250, R2260, and R2266. Residues 2287-2309 (AAKAPGAGGPSRPEMPVGAAREE) are disordered. The O-linked (GlcNAc) threonine glycan is linked to T2314. Positions 2324–2341 (GAPAPAPLAGQKPPADAA) are enriched in low complexity. Disordered regions lie at residues 2324 to 2370 (GAPA…KQQE) and 2532 to 2568 (PSSASDMSLQTEEQWEASRSGIKKRHSMPRLRDACEL). Positions 2351-2476 (RPGFEKEEAS…EEQKQRQKAP (126 aa)) form a coiled coil. Positions 2353–2370 (GFEKEEASQEERQRKQQE) are enriched in basic and acidic residues. The span at 2533-2543 (SSASDMSLQTE) shows a compositional bias: polar residues. S2570 carries the post-translational modification Phosphoserine. A phosphothreonine mark is found at T2587 and T2614. A disordered region spans residues 2601–2655 (RRRARRSADCSVQTDDEDSAEWEQPVRRRRSRLPRHSDSGSDSKHDATASSSSAA). The span at 2635 to 2647 (RHSDSGSDSKHDA) shows a compositional bias: basic and acidic residues. The O-linked (GlcNAc) threonine glycan is linked to T2691. The interval 2721–3268 (EPDGQAQGVA…PGSSGRPGKE (548 aa)) is interaction with DAO. Phosphoserine is present on residues S2802, S2851, and S2857. Residues 2845–2865 (TLQRSLSDPKPLSPTAEESAK) form a disordered region. O-linked (GlcNAc) threonine glycosylation occurs at T2936. Residues 2939 to 2981 (SLLRELDRDLRLVEHESTKLRKKQAELDEEEKEIDAKLKYLEL) adopt a coiled-coil conformation. At S3013 the chain carries Phosphoserine. Over residues 3039 to 3055 (AAAPATPSGPTAFQQPR) the composition is skewed to low complexity. 3 disordered regions span residues 3039–3375 (AAAP…FSPI), 3424–3551 (GMSS…PRAH), and 3572–3897 (EAYH…SVFS). The span at 3083 to 3095 (YPGPSTYPAPAFP) shows a compositional bias: pro residues. Residues 3165 to 3176 (ASPVVPMSSAPS) are compositionally biased toward low complexity. The segment covering 3205–3228 (SVSQSPAPTYPSDSHYTSLEQNVP) has biased composition (polar residues). S3291 is subject to Phosphoserine. Basic and acidic residues-rich tracts occupy residues 3321-3333 (GDSDYRHGARVEK), 3363-3375 (QGMEQKISKFSPI), and 3465-3477 (GYEREREAVERLQ). S3373 is modified (phosphoserine). Residue R3492 is modified to Omega-N-methylarginine. 4 stretches are compositionally biased toward basic and acidic residues: residues 3540–3551 (VQEHVKDGPRAH), 3583–3593 (WFDKPRDARSD), 3628–3647 (LWPHDEGGPGRHASAKEHRH), and 3657–3681 (HTGEEPGRRAAKPHARDLGRHEARP). The span at 3703-3712 (AEYSQPSRAS) shows a compositional bias: polar residues. Low complexity predominate over residues 3741 to 3807 (PQAQPQLQGR…RLQQQSQPTT (67 aa)). Omega-N-methylarginine is present on R3808. Low complexity-rich tracts occupy residues 3849-3860 (AKAPQQGRAPQA) and 3882-3892 (GAPAGQPGADG).

As to quaternary structure, interacts with PCLO, ERC2/CAST1, RIMS1 and UNC13A. Interacts with TPRG1L. Interacts with DYNLL1 and DYNLL2; these interactions potentially link PTVs to dynein and myosin V motor complexes. Interacts with ATG5; this interaction is important for the regulation of presynaptic autophagy. Interacts (via C-terminus) with TRIO (via N-terminus). Interacts with CTBP1. Interacts with SIAH1; this interaction negatively regulates SIAH1 E3 ligase activity. Interacts (via coiled region) with DAO; the interaction is direct. Myristoylated. The N-terminal myristoylation is not sufficient for presynaptic localization. As to expression, exclusively expressed in brain.

It is found in the cytoplasm. It localises to the presynaptic active zone. The protein resides in the cytoskeleton. Its subcellular location is the cytoplasmic vesicle. The protein localises to the secretory vesicle. It is found in the synaptic vesicle membrane. In terms of biological role, scaffold protein of the presynaptic cytomatrix at the active zone (CAZ) which is the place in the synapse where neurotransmitter is released. After synthesis, participates in the formation of Golgi-derived membranous organelles termed Piccolo-Bassoon transport vesicles (PTVs) that are transported along axons to sites of nascent synaptic contacts. At the presynaptic active zone, regulates the spatial organization of synaptic vesicle cluster, the protein complexes that execute membrane fusion and compensatory endocytosis. Also functions in processes other than assembly such as the regulation of specific presynaptic protein ubiquitination by interacting with SIAH1 or the regulation of presynaptic autophagy by associating with ATG5. Also mediates synapse to nucleus communication leading to reconfiguration of gene expression by associating with the transcriptional corepressor CTBP1 and by subsequently reducing the size of its pool available for nuclear import. Inhibits the activity of the proportion of DAO enzyme that localizes to the presynaptic active zone, which may modulate synaptic transmission. This chain is Protein bassoon, found in Homo sapiens (Human).